Consider the following 223-residue polypeptide: Glutathione S-transferase U6 (223 aa).

Positions 5–84 (EEVKLLGIWA…YIDETWKHNP (80 aa)) constitute a GST N-terminal domain. Residues 15–16 (SP), 41–42 (NK), 55–56 (KI), and 68–69 (ES) contribute to the glutathione site. The GST C-terminal domain maps to 89-216 (DPFQRSKARV…EKHIEHMNNM (128 aa)). A Phosphothreonine modification is found at Thr-150.

This sequence belongs to the GST superfamily. Tau family.

Its subcellular location is the cytoplasm. It is found in the cytosol. It carries out the reaction RX + glutathione = an S-substituted glutathione + a halide anion + H(+). Functionally, may be involved in the conjugation of reduced glutathione to a wide number of exogenous and endogenous hydrophobic electrophiles and have a detoxification role against certain herbicides. The sequence is that of Glutathione S-transferase U6 (GSTU6) from Arabidopsis thaliana (Mouse-ear cress).